The following is a 326-amino-acid chain: N-acetyl-gamma-glutamyl-phosphate reductase (326 aa).

Residue Cys155 is part of the active site.

It belongs to the NAGSA dehydrogenase family. Type 1 subfamily.

Its subcellular location is the cytoplasm. It carries out the reaction N-acetyl-L-glutamate 5-semialdehyde + phosphate + NADP(+) = N-acetyl-L-glutamyl 5-phosphate + NADPH + H(+). Its pathway is amino-acid biosynthesis; L-arginine biosynthesis; N(2)-acetyl-L-ornithine from L-glutamate: step 3/4. Catalyzes the NADPH-dependent reduction of N-acetyl-5-glutamyl phosphate to yield N-acetyl-L-glutamate 5-semialdehyde. This Shewanella sediminis (strain HAW-EB3) protein is N-acetyl-gamma-glutamyl-phosphate reductase.